Consider the following 682-residue polypeptide: Methionine--tRNA ligase (682 aa).

A 'HIGH' region motif is present at residues Pro-14–His-24. Residues Cys-145, Cys-148, Cys-158, and Cys-161 each coordinate Zn(2+). The 'KMSKS' region signature appears at Lys-331 to Ser-335. Lys-334 contributes to the ATP binding site. A tRNA-binding domain is found at Ala-580–Lys-682.

This sequence belongs to the class-I aminoacyl-tRNA synthetase family. MetG type 1 subfamily. Homodimer. It depends on Zn(2+) as a cofactor.

Its subcellular location is the cytoplasm. It carries out the reaction tRNA(Met) + L-methionine + ATP = L-methionyl-tRNA(Met) + AMP + diphosphate. Functionally, is required not only for elongation of protein synthesis but also for the initiation of all mRNA translation through initiator tRNA(fMet) aminoacylation. The polypeptide is Methionine--tRNA ligase (Pseudomonas savastanoi pv. phaseolicola (strain 1448A / Race 6) (Pseudomonas syringae pv. phaseolicola (strain 1448A / Race 6))).